Consider the following 325-residue polypeptide: GMP reductase (325 aa).

Residue Cys173 is the Thioimidate intermediate of the active site. Residue 202–225 (IIADGGIHEHGDIAKSIRFGATMV) coordinates NADP(+).

The protein belongs to the IMPDH/GMPR family. GuaC type 2 subfamily.

It carries out the reaction IMP + NH4(+) + NADP(+) = GMP + NADPH + 2 H(+). In terms of biological role, catalyzes the irreversible NADPH-dependent deamination of GMP to IMP. It functions in the conversion of nucleobase, nucleoside and nucleotide derivatives of G to A nucleotides, and in maintaining the intracellular balance of A and G nucleotides. The chain is GMP reductase from Albidiferax ferrireducens (strain ATCC BAA-621 / DSM 15236 / T118) (Rhodoferax ferrireducens).